The chain runs to 572 residues: Asparagine--tRNA ligase, cytoplasmic 1 (572 aa).

An N-acetylalanine modification is found at Ala2. Positions Val53–Val131 form a DNA-binding region, OB. Positions Asp236–Pro292 constitute a WHEP-TRS domain.

Belongs to the class-II aminoacyl-tRNA synthetase family.

It localises to the cytoplasm. The protein resides in the cytosol. The enzyme catalyses tRNA(Asn) + L-asparagine + ATP = L-asparaginyl-tRNA(Asn) + AMP + diphosphate + H(+). This Arabidopsis thaliana (Mouse-ear cress) protein is Asparagine--tRNA ligase, cytoplasmic 1.